Here is a 167-residue protein sequence, read N- to C-terminus: Phosphopantetheine adenylyltransferase (167 aa).

Thr-9 contacts substrate. Residues 9–10 (TF) and His-17 contribute to the ATP site. Residues Lys-41, Leu-73, and Arg-87 each coordinate substrate. Residues 88 to 90 (GLR), Glu-98, and 123 to 129 (NSYISST) contribute to the ATP site.

The protein belongs to the bacterial CoaD family. Homohexamer. Requires Mg(2+) as cofactor.

It localises to the cytoplasm. The catalysed reaction is (R)-4'-phosphopantetheine + ATP + H(+) = 3'-dephospho-CoA + diphosphate. The protein operates within cofactor biosynthesis; coenzyme A biosynthesis; CoA from (R)-pantothenate: step 4/5. Its function is as follows. Reversibly transfers an adenylyl group from ATP to 4'-phosphopantetheine, yielding dephospho-CoA (dPCoA) and pyrophosphate. In Chromohalobacter salexigens (strain ATCC BAA-138 / DSM 3043 / CIP 106854 / NCIMB 13768 / 1H11), this protein is Phosphopantetheine adenylyltransferase.